The primary structure comprises 211 residues: Calcipressin-like protein (211 aa).

Residues Ser113 and Ser117 each carry the phosphoserine modification. Phosphothreonine is present on Thr182.

Belongs to the RCAN family.

In terms of biological role, inhibits calcineurin-dependent transcriptional responses by binding to the catalytic domain of calcineurin. The chain is Calcipressin-like protein (RCN1) from Saccharomyces cerevisiae (strain ATCC 204508 / S288c) (Baker's yeast).